We begin with the raw amino-acid sequence, 384 residues long: Guanine nucleotide-binding protein alpha-1 subunit (384 aa).

The tract at residues 1-22 (MGSLCSRNKHYSQADDEENTQT) is disordered. Residue G2 is the site of N-myristoyl glycine attachment. C5 is lipidated: S-palmitoyl cysteine. The G-alpha domain occupies 38–384 (HIQKLLLLGA…RRNLFEAGLL (347 aa)). The segment at 41-54 (KLLLLGAGDSGKST) is G1 motif. GTP contacts are provided by D49, S50, G51, K52, S53, T54, D163, L188, T194, G222, N288, K289, D291, and A356. S53 contributes to the Mg(2+) binding site. Residues 186–194 (DVLFARIRT) are G2 motif. Position 194 (T194) interacts with Mg(2+). The tract at residues 215 to 224 (YRLFDVGGQR) is G3 motif. Residues 284 to 291 (MLFLNKFD) form a G4 motif region. The G5 motif stretch occupies residues 354 to 359 (TTALDQ).

Belongs to the G-alpha family. G proteins are composed of 3 units; alpha, beta and gamma. The alpha chain contains the guanine nucleotide binding site. Requires Mg(2+) as cofactor.

Guanine nucleotide-binding proteins (G proteins) are involved as modulators or transducers in various transmembrane signaling systems. This Solanum tuberosum (Potato) protein is Guanine nucleotide-binding protein alpha-1 subunit (GPA1).